The sequence spans 306 residues: Leucine-rich repeat-containing protein 75B (306 aa).

Residues 1 to 22 (MGARLGRRARADAPAAPSAGPA) form a disordered region. Low complexity predominate over residues 12–22 (DAPAAPSAGPA). 2 LRR repeats span residues 173 to 186 (LVVL…LSDE) and 198 to 211 (LPRL…GNRL).

This sequence belongs to the LRRC75 family.

In terms of biological role, may suppress myogenic differentiation by modulating MYOG expression and Erk1/2 signaling. This Mus musculus (Mouse) protein is Leucine-rich repeat-containing protein 75B.